The sequence spans 426 residues: Target of rapamycin complex 2 subunit AVO2 (426 aa).

ANK repeat units lie at residues 4–33 (EPSVRLREAIIEGNLLIVKRLLRRNPDLLT), 39–68 (NGWSSLHYASYHGRYLICVYLIQLGHDKHE), 74–104 (KGNTCVHLALMKGHEQTLHLLLQQFPRFINH), 108–137 (NGRAPIHIACMNDYYQCLSLLIGVGADLWV), and 141–171 (NGDTPLHVCLEYGSISCMKMLLNEGEVSLDD). Residues 259–302 (STHTTSGNGGNRRSSITNPVFNPRKPTLSTDSFSSSSNSSSRLR) are disordered. Polar residues predominate over residues 260 to 278 (THTTSGNGGNRRSSITNPV). A compositionally biased stretch (low complexity) spans 285-302 (TLSTDSFSSSSNSSSRLR). Ser315 and Ser350 each carry phosphoserine. Over residues 350–359 (SNDNVRGDSQ) the composition is skewed to polar residues. The disordered stretch occupies residues 350–392 (SNDNVRGDSQTATINDDGGGGNGGDATIGMGLRKDPDDENENK). Over residues 366–375 (DGGGGNGGDA) the composition is skewed to gly residues. Residues 381 to 392 (LRKDPDDENENK) show a composition bias toward basic and acidic residues.

In terms of assembly, the target of rapamycin complex 2 (TORC2) is composed of at least AVO1, AVO2, BIT61, LST8, TOR2 and TSC11. TORC2 forms a homodimer. Contrary to TORC1, TORC2 does not bind to and is not sensitive to FKBP-rapamycin. AVO2 is peripherally associated to AVO1 and TSC11.

The protein localises to the cell membrane. It is found in the vacuole membrane. Component of TORC2, which regulates cell cycle-dependent polarization of the actin-cytoskeleton and cell wall integrity. TORC2 controls polarity of the actin cytoskeleton, which is required for orienting the secretory pathway toward discrete growth sites, via the RHO1/PKC1/MAPK cell integrity pathway. This is Target of rapamycin complex 2 subunit AVO2 (AVO2) from Saccharomyces cerevisiae (strain ATCC 204508 / S288c) (Baker's yeast).